Here is an 815-residue protein sequence, read N- to C-terminus: BTB/POZ domain-containing protein KCTD3 (815 aa).

One can recognise a BTB domain in the interval 18–87 (EIVQLNVGGT…LRTKELDLRG (70 aa)). Over residues 139-168 (INNTVRSADSRNGLNSTEGEARGNGTQPVL) the composition is skewed to polar residues. The segment at 139–170 (INNTVRSADSRNGLNSTEGEARGNGTQPVLSG) is disordered. WD repeat units lie at residues 174–218 (ETVR…GWQQ), 224–263 (YLDWTIERVALNAKVVGGPHGDKDKMVAVASESSIILWSV), 270–305 (SEIGVFSLGVPVDALFFIGNQLVATSHTGKVGVWNA), 310–342 (WQVQDVVPITSYDTAGSFLLLGCNNGSIYYIDM), 354–404 (LLVT…VQHP), 412–449 (QLFQTFTVHRSPVTKIMLSEKHLVSVCADNNHVRTWTV), 457–504 (STQP…IQKV), and 510–569 (KLFV…MWDL). Positions 512-815 (FVRLSSTGKR…SDSSGQEYSL (304 aa)) are interaction with HCN3. 3 positions are modified to phosphoserine: serine 604, serine 664, and serine 711. Basic and acidic residues predominate over residues 736 to 758 (SESKKRSSEDENENKIEFRKKGG). Residues 736-815 (SESKKRSSED…SDSSGQEYSL (80 aa)) are disordered. Over residues 774–800 (ASSPSTSDGGTDSPGTASPSPTKTTPS) the composition is skewed to low complexity. A Phosphoserine modification is found at serine 793.

Belongs to the KCTD3 family. As to quaternary structure, interacts with HCN3. Broadly expressed in normal tissues.

It localises to the cell membrane. In terms of biological role, accessory subunit of potassium/sodium hyperpolarization-activated cyclic nucleotide-gated channel 3 (HCN3) up-regulating its cell-surface expression and current density without affecting its voltage dependence and kinetics. The chain is BTB/POZ domain-containing protein KCTD3 (KCTD3) from Homo sapiens (Human).